We begin with the raw amino-acid sequence, 697 residues long: Protein arginine N-methyltransferase 7 (697 aa).

SAM-dependent MTase PRMT-type domains lie at 14 to 357 (QNTW…YSLW) and 366 to 697 (EQPA…EETK).

The protein belongs to the class I-like SAM-binding methyltransferase superfamily. Protein arginine N-methyltransferase family. PRMT7 subfamily.

Functionally, essential arginine methyltransferase that can both catalyze the formation of omega-N monomethylarginine (MMA) and symmetrical dimethylarginine (sDMA). Specifically mediates the symmetrical dimethylation of arginine residues in the small nuclear ribonucleoproteins SmD1 and SmD3. The chain is Protein arginine N-methyltransferase 7 (Art7) from Drosophila virilis (Fruit fly).